A 329-amino-acid chain; its full sequence is tRNA pseudouridine synthase B (329 aa).

Substrate is bound at residue histidine 43. Aspartate 48 (nucleophile) is an active-site residue. Tyrosine 76, tyrosine 179, and leucine 200 together coordinate substrate.

Belongs to the pseudouridine synthase TruB family. Type 1 subfamily.

The enzyme catalyses uridine(55) in tRNA = pseudouridine(55) in tRNA. Its function is as follows. Responsible for synthesis of pseudouridine from uracil-55 in the psi GC loop of transfer RNAs. The protein is tRNA pseudouridine synthase B of Yersinia enterocolitica serotype O:8 / biotype 1B (strain NCTC 13174 / 8081).